The primary structure comprises 319 residues: tRNA uridine(34) hydroxylase (319 aa).

The 95-residue stretch at 127–221 folds into the Rhodanese domain; it reads KQEDTVIIDA…YGKDPEVQGE (95 aa). The active-site Cysteine persulfide intermediate is the C181.

Belongs to the TrhO family.

It carries out the reaction uridine(34) in tRNA + AH2 + O2 = 5-hydroxyuridine(34) in tRNA + A + H2O. In terms of biological role, catalyzes oxygen-dependent 5-hydroxyuridine (ho5U) modification at position 34 in tRNAs. The sequence is that of tRNA uridine(34) hydroxylase from Bacillus thuringiensis (strain Al Hakam).